The chain runs to 875 residues: GATOR2 complex protein MIOS (875 aa).

WD repeat units follow at residues 58–100 (SDTP…NSKF), 111–155 (KHAR…TPDI), 182–221 (GQND…QKMF), 223–261 (NTKA…KPVL), 265–306 (EQPK…TPIG), and 395–437 (RLRA…KQYT). A C4-type zinc finger spans residues 735–781 (VSCNFCGKSISYSCSAVPHQGRGFSQYGVSGSPTKSKVTSCPGCRKP). 2 residues coordinate Zn(2+): cysteine 737 and cysteine 740. Phosphoserine is present on residues serine 759 and serine 766. The Zn(2+) site is built by cysteine 775, cysteine 778, cysteine 788, cysteine 827, cysteine 830, histidine 832, histidine 835, histidine 838, cysteine 849, cysteine 854, and cysteine 858. The RING-type; atypical zinc finger occupies 782–863 (LPRCALCLIN…CTCKCMQLDT (82 aa)).

Belongs to the WD repeat mio family. Component of the GATOR2 subcomplex, composed of MIOS, SEC13, SEH1L, WDR24 and WDR59. The GATOR2 complex interacts with CASTOR1 and CASTOR2; the interaction is negatively regulated by arginine. CASTOR1 and CASTOR2 convey leucine availability via direct interaction with MIOS. The GATOR2 complex interacts with SESN1, SESN2 and SESN3; the interaction is negatively regulated by amino acids. Interacts with SAR1A and SAR1B; the interaction is direct, disrupted by leucine and mediates the interaction of SAR1A or SAR1B with the GATOR2 complex to negatively regulate the TORC1 signaling upon leucine deprivation.

The protein resides in the lysosome membrane. Its activity is regulated as follows. The GATOR2 complex is negatively regulated by the upstream amino acid sensors CASTOR1 and SESN2, which sequester the GATOR2 complex in absence of amino acids. In the presence of abundant amino acids, GATOR2 is released from CASTOR1 and SESN2 and activated. Functionally, as a component of the GATOR2 complex, functions as an activator of the amino acid-sensing branch of the mTORC1 signaling pathway. The GATOR2 complex indirectly activates mTORC1 through the inhibition of the GATOR1 subcomplex. GATOR2 probably acts as an E3 ubiquitin-protein ligase toward GATOR1. In the presence of abundant amino acids, the GATOR2 complex mediates ubiquitination of the NPRL2 core component of the GATOR1 complex, leading to GATOR1 inactivation. In the absence of amino acids, GATOR2 is inhibited, activating the GATOR1 complex. Within the GATOR2 complex, MIOS is required to prevent autoubiquitination of WDR24, the catalytic subunit of the complex. The GATOR2 complex is required for brain myelination. The protein is GATOR2 complex protein MIOS of Homo sapiens (Human).